We begin with the raw amino-acid sequence, 586 residues long: Urease subunit alpha (586 aa).

The region spanning 134–586 is the Urease domain; sequence GAIDTHIHFI…LPMAQRYFLF (453 aa). The Ni(2+) site is built by His-139, His-141, and Lys-222. Lys-222 carries the post-translational modification N6-carboxylysine. Substrate is bound at residue His-224. 2 residues coordinate Ni(2+): His-251 and His-277. His-325 (proton donor) is an active-site residue. Asp-365 lines the Ni(2+) pocket.

This sequence belongs to the metallo-dependent hydrolases superfamily. Urease alpha subunit family. Heterotrimer of UreA (gamma), UreB (beta) and UreC (alpha) subunits. Three heterotrimers associate to form the active enzyme. Ni cation is required as a cofactor. In terms of processing, carboxylation allows a single lysine to coordinate two nickel ions.

The protein resides in the cytoplasm. The enzyme catalyses urea + 2 H2O + H(+) = hydrogencarbonate + 2 NH4(+). It functions in the pathway nitrogen metabolism; urea degradation; CO(2) and NH(3) from urea (urease route): step 1/1. The protein is Urease subunit alpha of Gloeothece citriformis (strain PCC 7424) (Cyanothece sp. (strain PCC 7424)).